Here is a 190-residue protein sequence, read N- to C-terminus: Prostaglandin-H2 D-isomerase (190 aa).

The first 22 residues, 1-22 (MATHHTLWMGLALLGVLGDLQA), serve as a signal peptide directing secretion. N51 is a glycosylation site (N-linked (GlcNAc...) asparagine). C65 acts as the Nucleophile in catalysis. N78 carries an N-linked (GlcNAc...) asparagine glycan. C89 and C186 are disulfide-bonded.

It belongs to the calycin superfamily. Lipocalin family. Monomer.

It localises to the rough endoplasmic reticulum. The protein resides in the nucleus membrane. The protein localises to the golgi apparatus. Its subcellular location is the cytoplasm. It is found in the perinuclear region. It localises to the secreted. The catalysed reaction is prostaglandin H2 = prostaglandin D2. Its function is as follows. Catalyzes the conversion of PGH2 to PGD2, a prostaglandin involved in smooth muscle contraction/relaxation and a potent inhibitor of platelet aggregation. Involved in a variety of CNS functions, such as sedation, NREM sleep and PGE2-induced allodynia, and may have an anti-apoptotic role in oligodendrocytes. Binds small non-substrate lipophilic molecules, including biliverdin, bilirubin, retinal, retinoic acid and thyroid hormone, and may act as a scavenger for harmful hydrophobic molecules and as a secretory retinoid and thyroid hormone transporter. Possibly involved in development and maintenance of the blood-brain, blood-retina, blood-aqueous humor and blood-testis barrier. It is likely to play important roles in both maturation and maintenance of the central nervous system and male reproductive system. Involved in PLA2G3-dependent maturation of mast cells. PLA2G3 is secreted by immature mast cells and acts on nearby fibroblasts upstream to PTDGS to synthesize PGD2, which in turn promotes mast cell maturation and degranulation via PTGDR. The protein is Prostaglandin-H2 D-isomerase (PTGDS) of Gorilla gorilla gorilla (Western lowland gorilla).